The primary structure comprises 375 residues: Alcohol dehydrogenase 1A (375 aa).

Ser2 carries the post-translational modification N-acetylserine. Ser23 carries the phosphoserine modification. Zn(2+) is bound at residue Cys47. An NAD(+)-binding site is contributed by 48-52 (GTDDH). Zn(2+) is bound by residues His68, Cys98, Cys101, Cys104, Cys112, and Cys175. NAD(+)-binding positions include 200 to 205 (GLGGVG), Asp224, Lys229, Ile270, 293 to 295 (VGV), 318 to 320 (AIL), and Arg370.

Belongs to the zinc-containing alcohol dehydrogenase family. In terms of assembly, dimer of identical or heterodimer of closely related subunits alpha, beta, or gamma that are encoded by genes ADH1A, ADH1B, and ADH1C, respectively. Requires Zn(2+) as cofactor.

The protein resides in the cytoplasm. It catalyses the reaction a primary alcohol + NAD(+) = an aldehyde + NADH + H(+). The catalysed reaction is a secondary alcohol + NAD(+) = a ketone + NADH + H(+). It carries out the reaction butan-1-ol + NAD(+) = butanal + NADH + H(+). The enzyme catalyses 1-propanol + NAD(+) = propanal + NADH + H(+). In terms of biological role, alcohol dehydrogenase. Oxidizes primary as well as secondary alcohols. Ethanol is a very poor substrate. This chain is Alcohol dehydrogenase 1A (ADH1A), found in Homo sapiens (Human).